We begin with the raw amino-acid sequence, 488 residues long: 5'-3' exonuclease PLD3 (488 aa).

Topologically, residues Met1–Trp38 are cytoplasmic. The chain crosses the membrane as a helical; Signal-anchor for type II membrane protein span at residues Val39–Leu59. Topologically, residues Trp60 to Leu488 are lumenal. Cystine bridges form between Cys77-Cys237 and Cys81-Cys235. Asn97 and Asn132 each carry an N-linked (GlcNAc...) asparagine glycan. The 28-residue stretch at Thr194 to Ser221 folds into the PLD phosphodiesterase 1 domain. Residues His199, Lys201, and Asp206 contribute to the active site. His199 (proton donor) is an active-site residue. Phosphate-binding residues include His199 and Lys201. Residue Asn216 coordinates phosphate. Asn234, Asn282, and Asn385 each carry an N-linked (GlcNAc...) asparagine glycan. An intrachain disulfide couples Cys364 to Cys485. A PLD phosphodiesterase 2 domain is found at Tyr409 to Tyr435. His414 contacts phosphate. His414 functions as the Nucleophile in the catalytic mechanism. Residue Phe436 participates in Mg(2+) binding.

It belongs to the phospholipase D family. As to quaternary structure, homodimer. Interacts with APP. Post-translationally, N-glycosylated. Proteolytically processed to a soluble form that is stable within endosomes and lysosomes. During transport through the secretory pathway becomes proteolysed by cysteine proteases, thereby releasing a stable soluble lysosomal lumenal polypeptide, whereas the transmembrane-bound fragment is rapidly degraded. Its transport route to lysosomes involves ubiquitination and the ESCRT complex. In terms of processing, ubiquitinated. Ubiquitination mediates sorting into lysosomes.

The protein resides in the endoplasmic reticulum membrane. It localises to the lysosome lumen. It is found in the early endosome membrane. Its subcellular location is the late endosome membrane. The protein localises to the golgi apparatus membrane. The protein resides in the endosome membrane. The catalysed reaction is Exonucleolytic cleavage in the 5'- to 3'-direction to yield nucleoside 3'-phosphates.. The enzyme catalyses a 5'-end 5'-dephospho-ribonucleotidyl-ribonucleotide-RNA + H2O = a ribonucleoside 3'-phosphate + a 5'-end dephospho-ribonucleoside-RNA + H(+). It catalyses the reaction a ribonucleoside 3'-phosphate-2'-3'-cyclophospho-GMP + H2O = a ribonucleoside 3'-phosphate + 2',3'-cyclophospho-GMP + H(+). It carries out the reaction a 5'-end 5'-dephospho-2'-deoxyribonucleotidyl-2'-deoxyribonucleotide in single-stranded DNA + H2O = a 5'-end dephospho-2'-deoxyribonucleoside in single-stranded DNA + a 2'-deoxyribonucleoside 3'-phosphate + H(+). The catalysed reaction is a 5'-end 5'-phospho-2'-deoxyribonucleotide in single-stranded DNA + H2O = a 5'-end 5'-dephospho-2'-deoxyribonucleotide in single-stranded DNA + phosphate. The enzyme catalyses a 3-lyso-sn-glycero-1-phospho-(3'-acyl-1'-sn-glycerol) + a 1-acyl-sn-glycerol = a 3-acyl-sn-glycero-1-phospho-(3'-acyl-1'-sn-glycerol) + glycerol. It catalyses the reaction 3-lyso-sn-glycero-1-phospho-(3'-(9Z-octadecenoyl)-1'-sn-glycerol) + 1-(9Z-octadecenoyl)-sn-glycerol = 3-(9Z-octadecenoyl)-sn-glycero-1-phospho-(3'-(9Z-octadecenoyl)-1'-sn-glycerol) + glycerol. Functionally, 5'-&gt;3' exonuclease that hydrolyzes the phosphodiester bond of single-stranded DNA (ssDNA) and RNA molecules to form nucleoside 3'-monophosphates and 5'-end 5'-hydroxy deoxyribonucleotide/ribonucleotide fragments. Partially redundant with PLD4, can cleave all four nucleotides displaying higher efficiency for ssDNA and RNA fragments initiated with uridine and guanosine residues and lower efficiency for cytidine-initiated substrates. As a result, it does not always degrade polynucleotides to the single nucleotide level, it can stall at specific sites sparing certain fragments from exonucleolytic degradation. Processes self and pathogenic ssDNA and RNA molecules that reach the endolysosomal compartment via phagocytosis or autophagy and may serve as 'danger' signals for recognition by innate immune receptors such as toll-like receptors (TLRs). Degrades mitochondrial CpG-rich ssDNA fragments to prevent TLR9 activation and autoinflammatory response, but it can cleave viral RNA to generate ligands for TLR7 activation and initiate antiviral immune responses. In plasmacytoid dendritic cells, it cooperates with endonuclease RNASET2 to release 2',3'-cyclic guanosine monophosphate (2',3'-cGMP), a potent stimulatory ligand for TLR7. Produces 2',3'-cGMPs and cytidine-rich RNA fragments that occupy TLR7 ligand-binding pockets and trigger a signaling-competent state. Can exert polynucleotide phosphatase activity toward 5'-phosphorylated ssDNA substrates although at a slow rate. Transphosphatidylase that catalyzes the exchange with R to S stereo-inversion of the glycerol moiety between (S,R)-lysophosphatidylglycerol (LPG) and monoacylglycerol (MAG) substrates to yield (S,S)-bis(monoacylglycero)phosphate (BMP). Can synthesize a variety of (S,S)-BMPs representing the main phospholipid constituent of lysosomal intralumenal vesicle (ILV) membranes that bind acid hydrolases for lipid degradation. Regulates the homeostasis and interorganellar communication of the endolysosomal system with an overall impact on cellular removal of dysfunctional organelles via autophagy as well as proper protein and lipid turnover. May play a role in myotube formation in response to ER stress. In Rattus norvegicus (Rat), this protein is 5'-3' exonuclease PLD3 (Pld3).